The chain runs to 440 residues: tRNA-2-methylthio-N(6)-dimethylallyladenosine synthase (440 aa).

The 117-residue stretch at N4–R120 folds into the MTTase N-terminal domain. Residues C13, C49, C83, C158, C162, and C165 each coordinate [4Fe-4S] cluster. The 231-residue stretch at G144 to E374 folds into the Radical SAM core domain. The TRAM domain maps to D377–P439.

The protein belongs to the methylthiotransferase family. MiaB subfamily. In terms of assembly, monomer. [4Fe-4S] cluster is required as a cofactor.

It localises to the cytoplasm. It carries out the reaction N(6)-dimethylallyladenosine(37) in tRNA + (sulfur carrier)-SH + AH2 + 2 S-adenosyl-L-methionine = 2-methylsulfanyl-N(6)-dimethylallyladenosine(37) in tRNA + (sulfur carrier)-H + 5'-deoxyadenosine + L-methionine + A + S-adenosyl-L-homocysteine + 2 H(+). In terms of biological role, catalyzes the methylthiolation of N6-(dimethylallyl)adenosine (i(6)A), leading to the formation of 2-methylthio-N6-(dimethylallyl)adenosine (ms(2)i(6)A) at position 37 in tRNAs that read codons beginning with uridine. This is tRNA-2-methylthio-N(6)-dimethylallyladenosine synthase from Pelobacter propionicus (strain DSM 2379 / NBRC 103807 / OttBd1).